The following is a 547-amino-acid chain: Chaperonin GroEL (547 aa).

ATP is bound by residues 30 to 33 (TLGP), lysine 51, 87 to 91 (DGTTT), glycine 415, and aspartate 495.

This sequence belongs to the chaperonin (HSP60) family. As to quaternary structure, forms a cylinder of 14 subunits composed of two heptameric rings stacked back-to-back. Interacts with the co-chaperonin GroES.

Its subcellular location is the cytoplasm. The enzyme catalyses ATP + H2O + a folded polypeptide = ADP + phosphate + an unfolded polypeptide.. Its function is as follows. Together with its co-chaperonin GroES, plays an essential role in assisting protein folding. The GroEL-GroES system forms a nano-cage that allows encapsulation of the non-native substrate proteins and provides a physical environment optimized to promote and accelerate protein folding. The chain is Chaperonin GroEL from Rhizobium leguminosarum bv. trifolii (strain WSM2304).